We begin with the raw amino-acid sequence, 298 residues long: MATH domain and coiled-coil domain-containing protein At3g58280 (298 aa).

The 120-residue stretch at Lys9–Val128 folds into the MATH domain. Residues Asn240–Ala288 are a coiled coil.

This chain is MATH domain and coiled-coil domain-containing protein At3g58280, found in Arabidopsis thaliana (Mouse-ear cress).